The following is a 158-amino-acid chain: SsrA-binding protein (158 aa).

The protein belongs to the SmpB family.

It is found in the cytoplasm. Required for rescue of stalled ribosomes mediated by trans-translation. Binds to transfer-messenger RNA (tmRNA), required for stable association of tmRNA with ribosomes. tmRNA and SmpB together mimic tRNA shape, replacing the anticodon stem-loop with SmpB. tmRNA is encoded by the ssrA gene; the 2 termini fold to resemble tRNA(Ala) and it encodes a 'tag peptide', a short internal open reading frame. During trans-translation Ala-aminoacylated tmRNA acts like a tRNA, entering the A-site of stalled ribosomes, displacing the stalled mRNA. The ribosome then switches to translate the ORF on the tmRNA; the nascent peptide is terminated with the 'tag peptide' encoded by the tmRNA and targeted for degradation. The ribosome is freed to recommence translation, which seems to be the essential function of trans-translation. The polypeptide is SsrA-binding protein (Glaesserella parasuis serovar 5 (strain SH0165) (Haemophilus parasuis)).